The chain runs to 206 residues: uncharacterized protein (206 aa).

Disordered regions lie at residues 38–88 (RLQQ…NKNA) and 160–206 (HQNT…SVQE). Low complexity predominate over residues 40 to 73 (QQQQQQQQQQQQNRTASSLQQPQQQQPISPPLFL). Position 68 is a phosphoserine (serine 68). Residues 78–88 (TSENSNLNKNA) are compositionally biased toward polar residues. A compositionally biased stretch (low complexity) spans 165–186 (SSSNPGSMSSSPPNSASSIFNS). Polar residues predominate over residues 192–206 (PYTSQSFNPLESVQE).

The protein localises to the cytoplasm. This is an uncharacterized protein from Saccharomyces cerevisiae (strain ATCC 204508 / S288c) (Baker's yeast).